A 355-amino-acid chain; its full sequence is Alanine racemase (355 aa).

The Proton acceptor; specific for D-alanine role is filled by K34. N6-(pyridoxal phosphate)lysine is present on K34. R133 contributes to the substrate binding site. Y249 (proton acceptor; specific for L-alanine) is an active-site residue. M297 lines the substrate pocket.

This sequence belongs to the alanine racemase family. Requires pyridoxal 5'-phosphate as cofactor.

It carries out the reaction L-alanine = D-alanine. The protein operates within amino-acid biosynthesis; D-alanine biosynthesis; D-alanine from L-alanine: step 1/1. Functionally, catalyzes the interconversion of L-alanine and D-alanine. May also act on other amino acids. This is Alanine racemase (alr) from Rickettsia canadensis (strain McKiel).